Reading from the N-terminus, the 240-residue chain is MKRPSGRVADQLRSIRITRNYTKHAEGSVLVEFGDTKVICTVSVENGVPRFLKGQGQGWLTAEYGMLPRSTGERNQREASRGKQGGRTLEIQRLIGRSLRAALDMSKLGDITLYVDCDVIQADGGTRTASITGAMVALCDALAVIKKRGGLKGGNPLKHMIAAVSVGMYQGEAVLDLDYLEDSAAETDLNVVMTSAGGFIEVQGTAEGAPFQPEDFNAMLALAQKGMNEIFELQQAALAD.

Residues Arg-87 and 125–127 each bind phosphate; that span reads GTR.

It belongs to the RNase PH family. As to quaternary structure, homohexameric ring arranged as a trimer of dimers.

It carries out the reaction tRNA(n+1) + phosphate = tRNA(n) + a ribonucleoside 5'-diphosphate. Functionally, phosphorolytic 3'-5' exoribonuclease that plays an important role in tRNA 3'-end maturation. Removes nucleotide residues following the 3'-CCA terminus of tRNAs; can also add nucleotides to the ends of RNA molecules by using nucleoside diphosphates as substrates, but this may not be physiologically important. Probably plays a role in initiation of 16S rRNA degradation (leading to ribosome degradation) during starvation. In Pseudomonas putida (strain ATCC 47054 / DSM 6125 / CFBP 8728 / NCIMB 11950 / KT2440), this protein is Ribonuclease PH.